The primary structure comprises 103 residues: Putative membrane protein insertion efficiency factor (103 aa).

It belongs to the UPF0161 family.

It localises to the cell membrane. Its function is as follows. Could be involved in insertion of integral membrane proteins into the membrane. The polypeptide is Putative membrane protein insertion efficiency factor (Clavibacter sepedonicus (Clavibacter michiganensis subsp. sepedonicus)).